We begin with the raw amino-acid sequence, 135 residues long: Small ribosomal subunit protein eS6 (135 aa).

The protein belongs to the eukaryotic ribosomal protein eS6 family.

The polypeptide is Small ribosomal subunit protein eS6 (Halorubrum lacusprofundi (strain ATCC 49239 / DSM 5036 / JCM 8891 / ACAM 34)).